We begin with the raw amino-acid sequence, 338 residues long: MSSDPTGRPIETRKLRHLEACLRPESQYQKVKTGLDSVPWPYRALPESNLEEMRLDTVFLGRRLKAPVLIGAMTGGAEKAGVINRNLATAARNLGLGMMLGSQRVMLEHPDAWESFNVREVAPEILLIGNLGAAQFMLGYGAEQARRAVDEVMADALAIHLNPLQEALQRGGDTRWQGVTYRLKQVARELDFPVIIKEVGHGLDAATLRALADGPFAAYDVAGAGGTSWARVEQLVAHGQVHSPDLCELGVPTAQALRQARKTLPGAQLIASGGIRSGLDAARALSLGAEVVAVARPLLEPALDSSEAAEAWLRNFIQELRVALFVGGYRDVREVRGG.

13–14 (RK) contacts substrate. FMN contacts are provided by residues 72–74 (AMT), Ser-102, and Asn-130. 102–104 (SQR) is a substrate binding site. Gln-165 contributes to the substrate binding site. Glu-166 provides a ligand contact to Mg(2+). Residues Lys-197, Thr-227, 274-276 (GIR), and 295-296 (AR) contribute to the FMN site.

The protein belongs to the IPP isomerase type 2 family. As to quaternary structure, homooctamer. Dimer of tetramers. FMN serves as cofactor. The cofactor is NADPH. Requires Mg(2+) as cofactor.

Its subcellular location is the cytoplasm. The catalysed reaction is isopentenyl diphosphate = dimethylallyl diphosphate. Functionally, involved in the biosynthesis of isoprenoids. Catalyzes the 1,3-allylic rearrangement of the homoallylic substrate isopentenyl (IPP) to its allylic isomer, dimethylallyl diphosphate (DMAPP). This chain is Isopentenyl-diphosphate delta-isomerase, found in Deinococcus radiodurans (strain ATCC 13939 / DSM 20539 / JCM 16871 / CCUG 27074 / LMG 4051 / NBRC 15346 / NCIMB 9279 / VKM B-1422 / R1).